Here is a 425-residue protein sequence, read N- to C-terminus: Glucan 1,3-beta-glucosidase (425 aa).

The N-terminal stretch at 1 to 19 is a signal peptide; sequence MNLTLLLLALIFSPSLIFS. Catalysis depends on glutamate 219, which acts as the Proton donor. Intrachain disulfides connect cysteine 301–cysteine 423 and cysteine 326–cysteine 352. Glutamate 318 acts as the Nucleophile in catalysis.

This sequence belongs to the glycosyl hydrolase 5 (cellulase A) family.

Its subcellular location is the secreted. The catalysed reaction is Successive hydrolysis of beta-D-glucose units from the non-reducing ends of (1-&gt;3)-beta-D-glucans, releasing alpha-glucose.. Functionally, beta-glucanases participate in the metabolism of beta-glucan, the main structural component of the cell wall. It could also function biosynthetically as a transglycosylase. The sequence is that of Glucan 1,3-beta-glucosidase from Schwanniomyces occidentalis (Yeast).